Here is a 322-residue protein sequence, read N- to C-terminus: Aspartate carbamoyltransferase catalytic subunit (322 aa).

Residues Arg65 and Thr66 each coordinate carbamoyl phosphate. Residue Lys93 participates in L-aspartate binding. 3 residues coordinate carbamoyl phosphate: Arg115, His143, and Gln146. Residues Arg176 and Arg230 each contribute to the L-aspartate site. 2 residues coordinate carbamoyl phosphate: Gly271 and Pro272.

This sequence belongs to the aspartate/ornithine carbamoyltransferase superfamily. ATCase family. In terms of assembly, heterododecamer (2C3:3R2) of six catalytic PyrB chains organized as two trimers (C3), and six regulatory PyrI chains organized as three dimers (R2).

The enzyme catalyses carbamoyl phosphate + L-aspartate = N-carbamoyl-L-aspartate + phosphate + H(+). It participates in pyrimidine metabolism; UMP biosynthesis via de novo pathway; (S)-dihydroorotate from bicarbonate: step 2/3. Functionally, catalyzes the condensation of carbamoyl phosphate and aspartate to form carbamoyl aspartate and inorganic phosphate, the committed step in the de novo pyrimidine nucleotide biosynthesis pathway. The sequence is that of Aspartate carbamoyltransferase catalytic subunit from Brucella canis (strain ATCC 23365 / NCTC 10854 / RM-666).